A 396-amino-acid chain; its full sequence is Endo-1,4-beta-xylanase A (396 aa).

The signal sequence occupies residues 1-28 (MITLFRKPFVAGLAISLLVGGGIGNVAA). The 346-residue stretch at 51–396 (AWQVASLSER…VKPAYWRIID (346 aa)) folds into the GH10 domain. The active-site Proton donor is E195. The active-site Nucleophile is the E301.

Belongs to the glycosyl hydrolase 10 (cellulase F) family.

The protein localises to the secreted. It catalyses the reaction Endohydrolysis of (1-&gt;4)-beta-D-xylosidic linkages in xylans.. It functions in the pathway glycan degradation; xylan degradation. The chain is Endo-1,4-beta-xylanase A (xynA) from Halalkalibacterium halodurans (strain ATCC BAA-125 / DSM 18197 / FERM 7344 / JCM 9153 / C-125) (Bacillus halodurans).